A 360-amino-acid polypeptide reads, in one-letter code: Snurportin-1 (360 aa).

At Met-1 the chain carries N-acetylmethionine. A disordered region spans residues 1–42 (MEELSQALASSFSVSQDLNSTAAPHPRLSQYKSKYSSLEQSE). Residues 1-65 (MEELSQALAS…LDYVNHARRL (65 aa)) form a necessary for interaction with KPNB1 and m3G-cap U1 and U5 snRNP import receptor activity region. Residues 1-159 (MEELSQALAS…NRFSSLLPGG (159 aa)) are necessary for interaction with XPO1. The segment covering 7 to 22 (ALASSFSVSQDLNSTA) has biased composition (polar residues). The IBB domain occupies 11-73 (SFSVSQDLNS…RLAEDDWTGM (63 aa)). Position 75 is a phosphoserine (Ser-75). An interaction with m3G-cap structure region spans residues 127–129 (GKR). Residues 208–328 (MHSKLPEEEG…GMKEKLTHKA (121 aa)) are necessary for binding to the m3G-cap structure. Residues 339-360 (LSTPKLKGSSHSPDHPGCLMEN) form a disordered region. Ser-350 is modified (phosphoserine).

It belongs to the snurportin family. In terms of assembly, component of an import snRNP complex composed of KPNB1, SNUPN, SMN1 and ZNF259. Component of a nuclear export receptor complex composed of KPNB1, Ran, SNUPN and XPO1. Found in a trimeric export complex with SNUPN, Ran and XPO1. Interacts (via IBB domain) with KPNB1; the interaction is direct. Interacts with DDX20, IPO7, SMN1, SNRPB and XPO1. Interacts directly with XPO1. Its interaction with XPO1 and binding to m3G-cap U snRNPs appears to be mutually exclusive. Can form homomers.

The protein resides in the nucleus. It localises to the cytoplasm. Functions as an U snRNP-specific nuclear import adapter. Involved in the trimethylguanosine (m3G)-cap-dependent nuclear import of U snRNPs. Binds specifically to the terminal m3G-cap U snRNAs. The polypeptide is Snurportin-1 (SNUPN) (Homo sapiens (Human)).